The sequence spans 326 residues: Fructose-1,6-bisphosphatase class 1 (326 aa).

Mg(2+)-binding residues include glutamate 90, aspartate 111, leucine 113, and aspartate 114. Substrate contacts are provided by residues 114 to 117, tyrosine 222, and lysine 253; that span reads DGSS. Residue glutamate 259 participates in Mg(2+) binding.

It belongs to the FBPase class 1 family. In terms of assembly, homotetramer. It depends on Mg(2+) as a cofactor.

Its subcellular location is the cytoplasm. It carries out the reaction beta-D-fructose 1,6-bisphosphate + H2O = beta-D-fructose 6-phosphate + phosphate. Its pathway is carbohydrate biosynthesis; gluconeogenesis. In Citrifermentans bemidjiense (strain ATCC BAA-1014 / DSM 16622 / JCM 12645 / Bem) (Geobacter bemidjiensis), this protein is Fructose-1,6-bisphosphatase class 1.